The primary structure comprises 102 residues: MQSQKIRIRLKAYDHKLLDVSVGEIVETAKRTGARVAGPIPLPTVINKYCVLRGPHVDKKSRDQFEIRTHKRLIDILDPTQQTVDALMKLDLSAGVDVEIKL.

It belongs to the universal ribosomal protein uS10 family. Part of the 30S ribosomal subunit.

Its function is as follows. Involved in the binding of tRNA to the ribosomes. The sequence is that of Small ribosomal subunit protein uS10 from Trichlorobacter lovleyi (strain ATCC BAA-1151 / DSM 17278 / SZ) (Geobacter lovleyi).